A 168-amino-acid polypeptide reads, in one-letter code: MNWMDIRIGQGYDVHALVEGRKLILGGVEIPHTRGLLGHSDADALLHAITDALFGAAGLGDIGRHFPDTDPAFAGADSRVLLREAVRRVHKAGYAVGNVDATVIAQKPKLAPHVPGMVANLAEDLGIAPERCNVKAKTNEKLGFEGKEEGIVAQAVVLIYRAEAAEQD.

A divalent metal cation contacts are provided by Asp13 and His15. 4-CDP-2-C-methyl-D-erythritol 2-phosphate is bound by residues 13–15 (DVH) and 39–40 (HS). His47 is a binding site for a divalent metal cation. Residues 61 to 63 (DIG), 66 to 70 (FPDTD), Phe144, and Lys147 each bind 4-CDP-2-C-methyl-D-erythritol 2-phosphate.

This sequence belongs to the IspF family. As to quaternary structure, homotrimer. The cofactor is a divalent metal cation.

It carries out the reaction 4-CDP-2-C-methyl-D-erythritol 2-phosphate = 2-C-methyl-D-erythritol 2,4-cyclic diphosphate + CMP. It participates in isoprenoid biosynthesis; isopentenyl diphosphate biosynthesis via DXP pathway; isopentenyl diphosphate from 1-deoxy-D-xylulose 5-phosphate: step 4/6. Functionally, involved in the biosynthesis of isopentenyl diphosphate (IPP) and dimethylallyl diphosphate (DMAPP), two major building blocks of isoprenoid compounds. Catalyzes the conversion of 4-diphosphocytidyl-2-C-methyl-D-erythritol 2-phosphate (CDP-ME2P) to 2-C-methyl-D-erythritol 2,4-cyclodiphosphate (ME-CPP) with a corresponding release of cytidine 5-monophosphate (CMP). The sequence is that of 2-C-methyl-D-erythritol 2,4-cyclodiphosphate synthase from Ralstonia pickettii (strain 12J).